Here is a 385-residue protein sequence, read N- to C-terminus: Carbamoyl phosphate synthase small chain (385 aa).

A CPSase region spans residues 1–185 (MSEPAILVLA…LGKGFIEQTQ (185 aa)). The L-glutamine site is built by Ser-47, Gly-237, and Gly-239. In terms of domain architecture, Glutamine amidotransferase type-1 spans 189-376 (NVVAYDFGVK…INEMRKANLS (188 aa)). Catalysis depends on Cys-265, which acts as the Nucleophile. The L-glutamine site is built by Leu-266, Gln-269, Asn-307, Gly-309, and Phe-310. Active-site residues include His-349 and Glu-351.

The protein belongs to the CarA family. In terms of assembly, composed of two chains; the small (or glutamine) chain promotes the hydrolysis of glutamine to ammonia, which is used by the large (or ammonia) chain to synthesize carbamoyl phosphate. Tetramer of heterodimers (alpha,beta)4.

The catalysed reaction is hydrogencarbonate + L-glutamine + 2 ATP + H2O = carbamoyl phosphate + L-glutamate + 2 ADP + phosphate + 2 H(+). It catalyses the reaction L-glutamine + H2O = L-glutamate + NH4(+). It participates in amino-acid biosynthesis; L-arginine biosynthesis; carbamoyl phosphate from bicarbonate: step 1/1. It functions in the pathway pyrimidine metabolism; UMP biosynthesis via de novo pathway; (S)-dihydroorotate from bicarbonate: step 1/3. Its function is as follows. Small subunit of the glutamine-dependent carbamoyl phosphate synthetase (CPSase). CPSase catalyzes the formation of carbamoyl phosphate from the ammonia moiety of glutamine, carbonate, and phosphate donated by ATP, constituting the first step of 2 biosynthetic pathways, one leading to arginine and/or urea and the other to pyrimidine nucleotides. The small subunit (glutamine amidotransferase) binds and cleaves glutamine to supply the large subunit with the substrate ammonia. This Pasteurella multocida (strain Pm70) protein is Carbamoyl phosphate synthase small chain.